The primary structure comprises 232 residues: 2,3,4,5-tetrahydropyridine-2,6-dicarboxylate N-acetyltransferase (232 aa).

Belongs to the transferase hexapeptide repeat family. DapH subfamily.

It carries out the reaction (S)-2,3,4,5-tetrahydrodipicolinate + acetyl-CoA + H2O = L-2-acetamido-6-oxoheptanedioate + CoA. The protein operates within amino-acid biosynthesis; L-lysine biosynthesis via DAP pathway; LL-2,6-diaminopimelate from (S)-tetrahydrodipicolinate (acetylase route): step 1/3. In terms of biological role, catalyzes the transfer of an acetyl group from acetyl-CoA to tetrahydrodipicolinate. The sequence is that of 2,3,4,5-tetrahydropyridine-2,6-dicarboxylate N-acetyltransferase from Streptococcus pneumoniae serotype 4 (strain ATCC BAA-334 / TIGR4).